The primary structure comprises 369 residues: Protein VP6 (369 aa).

Disordered regions lie at residues 17 to 169 and 184 to 208; these read KREL…LQGR and LDRI…GGDR. Over residues 29 to 68 the composition is skewed to basic and acidic residues; that stretch reads LREKGSTEAKSKLKEDGEKKNKSEKEENKIHDDRRVESQK. Residues 92-111 are compositionally biased toward gly residues; it reads TGGGDGSAGARTGIGGGGVG. Composition is skewed to basic and acidic residues over residues 137–148 and 196–208; these read TGADRVANDDAT and TEGE…GGDR.

It belongs to the orbivirus VP6 family.

The protein resides in the virion. The sequence is that of Protein VP6 (Segment-9) from African horse sickness virus (AHSV).